Here is a 132-residue protein sequence, read N- to C-terminus: Small ribosomal subunit protein uS8 (132 aa).

It belongs to the universal ribosomal protein uS8 family. Part of the 30S ribosomal subunit. Contacts proteins S5 and S12.

Functionally, one of the primary rRNA binding proteins, it binds directly to 16S rRNA central domain where it helps coordinate assembly of the platform of the 30S subunit. The protein is Small ribosomal subunit protein uS8 of Rhodococcus erythropolis (strain PR4 / NBRC 100887).